The primary structure comprises 430 residues: Glutamate-1-semialdehyde 2,1-aminomutase (430 aa).

Lysine 265 is modified (N6-(pyridoxal phosphate)lysine).

It belongs to the class-III pyridoxal-phosphate-dependent aminotransferase family. HemL subfamily. As to quaternary structure, homodimer. Requires pyridoxal 5'-phosphate as cofactor.

It localises to the cytoplasm. It catalyses the reaction (S)-4-amino-5-oxopentanoate = 5-aminolevulinate. The protein operates within porphyrin-containing compound metabolism; protoporphyrin-IX biosynthesis; 5-aminolevulinate from L-glutamyl-tRNA(Glu): step 2/2. The polypeptide is Glutamate-1-semialdehyde 2,1-aminomutase (Shewanella baltica (strain OS155 / ATCC BAA-1091)).